The following is a 116-amino-acid chain: MMHHLIQEITKEQLRTDLPDFRPGDTVRVHVKVIEGNRERIQVFEGVVIKRRGAGISETFTVRKVSYGVGVERTFPVHTPKIAKLEVVRRGKVRRAKLYYLRQLRGKAARIKEIVR.

It belongs to the bacterial ribosomal protein bL19 family.

Its function is as follows. This protein is located at the 30S-50S ribosomal subunit interface and may play a role in the structure and function of the aminoacyl-tRNA binding site. This Geobacillus sp. (strain WCH70) protein is Large ribosomal subunit protein bL19.